The sequence spans 64 residues: MSKITIVQCPQCGTDVEWGEQSPHRPFCSKKCQMIDFGEWADEENAIAGAPDMSDSDGWSEDQY.

Residues Cys9, Cys12, Cys28, and Cys32 each coordinate Zn(2+). A disordered region spans residues 45–64; it reads NAIAGAPDMSDSDGWSEDQY. The span at 54 to 64 shows a compositional bias: acidic residues; that stretch reads SDSDGWSEDQY.

This sequence belongs to the DNA gyrase inhibitor YacG family. Interacts with GyrB. The cofactor is Zn(2+).

Functionally, inhibits all the catalytic activities of DNA gyrase by preventing its interaction with DNA. Acts by binding directly to the C-terminal domain of GyrB, which probably disrupts DNA binding by the gyrase. The polypeptide is DNA gyrase inhibitor YacG (Vibrio parahaemolyticus serotype O3:K6 (strain RIMD 2210633)).